A 284-amino-acid chain; its full sequence is MKKFTHYIVEQIVNKYNKMFQCKMNKIPKNQSITHFKTVFDLYEKIGIQEVFFNIKPTGIYIYTTYDNSIHVETIFSNNFFLEYMCEKDAIFTLKVNAMKVRNLVNTDSLEMGIRSAQDAPLVIRMSTKTIDFEKKIAIKKTQSYKLPELIDVTPLTIKSADFLEFCKSINGGKYTLSIKTKKSEMVNGVLQRGEIIFEAENSRIVIRSETPIESEFEGEFKSEYFSSLRKVTKFNTTLKIYLCPDHPLIFETTIGPKEKDKVIVWIKSLKQMEEEYHLQKSIT.

It belongs to the IIV-6 436R family.

This is an uncharacterized protein from Invertebrate iridescent virus 3 (IIV-3).